A 393-amino-acid polypeptide reads, in one-letter code: Reticulon-like protein 2 (393 aa).

Residues 1–21 are compositionally biased toward low complexity; sequence MNRNTTTNKNANLNNSRNANA. Residues 1 to 25 form a disordered region; the sequence is MNRNTTTNKNANLNNSRNANAPGEA. Residues 1–60 lie on the Cytoplasmic side of the membrane; that stretch reads MNRNTTTNKNANLNNSRNANAPGEAGHQNKTGLIYWTNPSKSGASFAATLVSLLILRNVN. The region spanning 30 to 236 is the Reticulon domain; sequence KTGLIYWTNP…SISNENKSST (207 aa). Residues 61-81 form a helical membrane-spanning segment; that stretch reads VISVLLKIGYMVLFTSFAVEL. Residues 82-149 are Lumenal-facing; the sequence is STKVLFDKGV…IGVSLYFLHG (68 aa). Asn-137 is a glycosylation site (N-linked (GlcNAc...) asparagine). A helical transmembrane segment spans residues 150-170; it reads LFAIFSMNTVLIMTTIFLYTV. Residues 171–393 lie on the Cytoplasmic side of the membrane; that stretch reads PLIYDRKQAR…HGLKQKLQHA (223 aa). Disordered regions lie at residues 214–313 and 339–393; these read IIPP…DVKT and GDYN…LQHA. A compositionally biased stretch (polar residues) spans 220–285; that stretch reads DEGSYSTSIS…PVSQNENIGT (66 aa). Position 278 is a phosphoserine (Ser-278). Residues 289-313 are compositionally biased toward basic and acidic residues; that stretch reads GKQEIPTEKDFNNRHENFSKPDVKT. A compositionally biased stretch (polar residues) spans 365 to 376; sequence PAESQSIPIKNN. The segment covering 381 to 393 has biased composition (basic residues); that stretch reads KTTHGLKQKLQHA.

Its subcellular location is the endoplasmic reticulum membrane. In Saccharomyces cerevisiae (strain ATCC 204508 / S288c) (Baker's yeast), this protein is Reticulon-like protein 2 (RTN2).